Reading from the N-terminus, the 281-residue chain is NAD kinase (281 aa).

The active-site Proton acceptor is the Asp-61. NAD(+) is bound by residues 61–62 (DG), 134–135 (ND), Arg-145, Asp-164, 175–180 (TAYSLS), and Gln-234.

Belongs to the NAD kinase family. A divalent metal cation serves as cofactor.

The protein resides in the cytoplasm. The catalysed reaction is NAD(+) + ATP = ADP + NADP(+) + H(+). Involved in the regulation of the intracellular balance of NAD and NADP, and is a key enzyme in the biosynthesis of NADP. Catalyzes specifically the phosphorylation on 2'-hydroxyl of the adenosine moiety of NAD to yield NADP. The polypeptide is NAD kinase (Clostridium botulinum (strain Loch Maree / Type A3)).